The sequence spans 180 residues: Insulin-like growth factor 2 (180 aa).

The first 24 residues, 1-24, serve as a signal peptide directing secretion; the sequence is MGIPMGKSMLVLLTFLAFASCCIA. Residues 25–52 are b; that stretch reads AYRPSETLCGGELVDTLQFVCGDRGFYF. 3 disulfide bridges follow: Cys33–Cys71, Cys45–Cys84, and Cys70–Cys75. The segment at 53-64 is c; it reads SRPASRVSRRSR. The segment at 65-85 is a; that stretch reads GIVEECCFRSCDLALLETYCA. A d region spans residues 86–91; it reads TPAKSE. The propeptide at 92-180 is e peptide; the sequence is RDVSTPPTVL…APPEMASNRK (89 aa). Thr96, Thr99, and Thr163 each carry an O-linked (GalNAc...) threonine glycan. A disordered region spans residues 161-180; it reads LPTQDPAHGGAPPEMASNRK.

The protein belongs to the insulin family. As to quaternary structure, interacts with MYORG; this interaction is required for IGF2 secretion. Interacts with integrins ITGAV:ITGB3 and ITGA6:ITGB4; integrin-binding is required for IGF2 signaling. Interacts with IGFBP2. Post-translationally, O-glycosylated with core 1 or possibly core 8 glycans. Thr-96 is a minor glycosylation site compared to Thr-99. In terms of processing, proteolytically processed by PCSK4, proIGF2 is cleaved at Arg-128 and Arg-92 to generate big-IGF2 and mature IGF2. Expressed in heart, placenta, lung, liver, muscle, kidney, tongue, limb, eye and pancreas.

It is found in the secreted. The insulin-like growth factors possess growth-promoting activity. Major fetal growth hormone in mammals. Plays a key role in regulating fetoplacental development. IGF2 is influenced by placental lactogen. Also involved in tissue differentiation. In adults, involved in glucose metabolism in adipose tissue, skeletal muscle and liver. Acts as a ligand for integrin which is required for IGF2 signaling. Positively regulates myogenic transcription factor MYOD1 function by facilitating the recruitment of transcriptional coactivators, thereby controlling muscle terminal differentiation. Inhibits myoblast differentiation and modulates metabolism via increasing the mitochondrial respiration rate. Its function is as follows. Preptin undergoes glucose-mediated co-secretion with insulin, and acts as a physiological amplifier of glucose-mediated insulin secretion. Exhibits osteogenic properties by increasing osteoblast mitogenic activity through phosphoactivation of MAPK1 and MAPK3. The protein is Insulin-like growth factor 2 of Homo sapiens (Human).